We begin with the raw amino-acid sequence, 222 residues long: UPF0758 protein HSM_0009 (222 aa).

One can recognise an MPN domain in the interval 99–222 (QEFTSPDTVR…YFSFAEQGWI (124 aa)). 3 residues coordinate Zn(2+): histidine 171, histidine 173, and aspartate 184. The JAMM motif motif lies at 171 to 184 (HNHPSGVSTPSMAD).

Belongs to the UPF0758 family.

In Histophilus somni (strain 2336) (Haemophilus somnus), this protein is UPF0758 protein HSM_0009.